The sequence spans 215 residues: Cytochrome b6 (215 aa).

The chain crosses the membrane as a helical span at residues 32–52 (IFYCLGGITLVCFLIQFATGF). Residue C35 coordinates heme c. Residues H86 and H100 each coordinate heme b. Transmembrane regions (helical) follow at residues 90–110 (ASMM…TGGF), 116–136 (LTWV…VTGY), and 186–206 (LHTF…FLMI). Residues H187 and H202 each contribute to the heme b site.

The protein belongs to the cytochrome b family. PetB subfamily. The 4 large subunits of the cytochrome b6-f complex are cytochrome b6, subunit IV (17 kDa polypeptide, PetD), cytochrome f and the Rieske protein, while the 4 small subunits are PetG, PetL, PetM and PetN. The complex functions as a dimer. Requires heme b as cofactor. The cofactor is heme c.

It is found in the cellular thylakoid membrane. Component of the cytochrome b6-f complex, which mediates electron transfer between photosystem II (PSII) and photosystem I (PSI), cyclic electron flow around PSI, and state transitions. This is Cytochrome b6 from Synechococcus sp. (strain JA-3-3Ab) (Cyanobacteria bacterium Yellowstone A-Prime).